The sequence spans 316 residues: BTB/POZ domain-containing adapter for CUL3-mediated RhoA degradation protein 2 (316 aa).

In terms of domain architecture, BTB spans 28 to 96; it reads KYVQLNVGGS…LRDDTITLPQ (69 aa). Over residues 268–279 the composition is skewed to polar residues; that stretch reads EATSRSRSQASP. The interval 268–288 is disordered; sequence EATSRSRSQASPSEDEDTFEL. Serine 278 is subject to Phosphoserine. Serine 280 is modified (phosphoserine; by CK2).

It belongs to the BACURD family. As to quaternary structure, component of the BCR(TNFAIP1) E3 ubiquitin ligase complex, at least composed of CUL3, TNFAIP1/BACURD2 and RBX1. Interacts with RHOA; with a preference for RhoA-GDP. Interacts with RHOB. Interacts with PCNA. Interacts with CSNK2B. Post-translationally, phosphorylation at Ser-280 by CK2 facilitates the nucleus localization and increases interaction with PCNA.

It is found in the cytoplasm. The protein localises to the nucleus. The protein resides in the endosome. Its pathway is protein modification; protein ubiquitination. In terms of biological role, substrate-specific adapter of a BCR (BTB-CUL3-RBX1) E3 ubiquitin-protein ligase complex involved in regulation of cytoskeleton structure. The BCR(TNFAIP1) E3 ubiquitin ligase complex mediates the ubiquitination of RHOA, leading to its degradation by the proteasome, thereby regulating the actin cytoskeleton and cell migration. Its interaction with RHOB may regulate apoptosis. May enhance the PCNA-dependent DNA polymerase delta activity. The sequence is that of BTB/POZ domain-containing adapter for CUL3-mediated RhoA degradation protein 2 (Tnfaip1) from Mus musculus (Mouse).